Here is a 112-residue protein sequence, read N- to C-terminus: UPF0102 protein TTHA0372 (112 aa).

It belongs to the UPF0102 family.

This chain is UPF0102 protein TTHA0372, found in Thermus thermophilus (strain ATCC 27634 / DSM 579 / HB8).